We begin with the raw amino-acid sequence, 450 residues long: Tubulin alpha chain (450 aa).

Position 11 (glutamine 11) interacts with GTP. Lysine 40 carries the N6-acetyllysine modification. GTP is bound by residues glutamate 71, serine 140, glycine 144, threonine 145, threonine 179, asparagine 206, and asparagine 228. Residue glutamate 71 participates in Mg(2+) binding. The active site involves glutamate 254.

It belongs to the tubulin family. Dimer of alpha and beta chains. A typical microtubule is a hollow water-filled tube with an outer diameter of 25 nm and an inner diameter of 15 nM. Alpha-beta heterodimers associate head-to-tail to form protofilaments running lengthwise along the microtubule wall with the beta-tubulin subunit facing the microtubule plus end conferring a structural polarity. Microtubules usually have 13 protofilaments but different protofilament numbers can be found in some organisms and specialized cells. Requires Mg(2+) as cofactor. Post-translationally, acetylation of alpha chains at Lys-40 stabilizes microtubules and affects affinity and processivity of microtubule motors. This modification has a role in multiple cellular functions, ranging from cell motility, cell cycle progression or cell differentiation to intracellular trafficking and signaling.

The protein localises to the cytoplasm. Its subcellular location is the cytoskeleton. The catalysed reaction is GTP + H2O = GDP + phosphate + H(+). In terms of biological role, tubulin is the major constituent of microtubules, a cylinder consisting of laterally associated linear protofilaments composed of alpha- and beta-tubulin heterodimers. Microtubules grow by the addition of GTP-tubulin dimers to the microtubule end, where a stabilizing cap forms. Below the cap, tubulin dimers are in GDP-bound state, owing to GTPase activity of alpha-tubulin. In Euplotoides octocarinatus (Freshwater ciliate), this protein is Tubulin alpha chain.